Here is a 1519-residue protein sequence, read N- to C-terminus: Rho guanine nucleotide exchange factor 40 (1519 aa).

Disordered regions lie at residues 194 to 237 (VGHQ…PVEG) and 253 to 503 (RGSP…LETV). Positions 200–218 (TLPPELPSGPPGLPSPPLP) are enriched in pro residues. Ser262 is modified (phosphoserine). Residues 280-290 (KGRHRRHRAWM) are compositionally biased toward basic residues. The span at 314-341 (ASPESPPGAEAVPEAAVLEVSEPPAEAV) shows a compositional bias: low complexity. Residues 355-367 (LRGGGGGGQGAEG) are compositionally biased toward gly residues. Phosphothreonine is present on Thr371. Over residues 374–386 (RTGKGNRRKKRAA) the composition is skewed to basic residues. Phosphoserine is present on Ser419. Basic and acidic residues predominate over residues 421–457 (SEHKLPECHLVKEEYEGSGKPESEPKELKTAGEKEPQ). The stretch at 828-871 (SAEVQERLAQAREALALEENATSQKVLDIFEQRLEQVESGLHRA) forms a coiled coil. Phosphoserine is present on residues Ser931 and Ser961. Residues 934–961 (ALREWGRCQARCQELERRIQQHVGEEAS) adopt a coiled-coil conformation. The disordered stretch occupies residues 955–1031 (HVGEEASPRG…ELAPEAEGRP (77 aa)). Residues 980–996 (WGPRSPSPSLSSLLLPS) show a composition bias toward low complexity. Residue Ser1082 is modified to Phosphoserine. The DH domain maps to 1085–1253 (AQQRLVSELI…REQEARGRDL (169 aa)). One can recognise a PH domain in the interval 1265 to 1372 (DLKEQGQLLH…WTSSIAQLLW (108 aa)). 3 positions are modified to phosphoserine: Ser1433, Ser1438, and Ser1474. A disordered region spans residues 1466–1519 (TLDSSGDVSPGPRNSPSLQPPHPGSSTPTLASRGILGLSRQSHARALSDPTTPL). Polar residues predominate over residues 1467 to 1482 (LDSSGDVSPGPRNSPS). Residue Thr1492 is modified to Phosphothreonine.

As to expression, expressed at higher level in the central nervous system and skeletal muscle and greater abundance in fetal than adult brain (at protein level).

The protein localises to the cytoplasm. May act as a guanine nucleotide exchange factor (GEF). The sequence is that of Rho guanine nucleotide exchange factor 40 (ARHGEF40) from Homo sapiens (Human).